Consider the following 507-residue polypeptide: Arylsulfatase A (507 aa).

The signal sequence occupies residues 1–18 (MGAPRSLLLALAAGLAVA). Residues aspartate 29, aspartate 30, and cysteine 69 each contribute to the Ca(2+) site. The Nucleophile role is filled by cysteine 69. Cysteine 69 is subject to 3-oxoalanine (Cys). Substrate is bound at residue lysine 123. Histidine 125 is an active-site residue. Substrate is bound at residue serine 150. Disulfide bonds link cysteine 156/cysteine 172 and cysteine 161/cysteine 168. The N-linked (GlcNAc...) asparagine glycan is linked to asparagine 158. An N-linked (GlcNAc...) asparagine glycan is attached at asparagine 184. Histidine 229 contributes to the substrate binding site. Aspartate 281 and asparagine 282 together coordinate Ca(2+). Intrachain disulfides connect cysteine 300–cysteine 414, cysteine 488–cysteine 500, cysteine 489–cysteine 502, and cysteine 493–cysteine 499. Lysine 302 lines the substrate pocket. Asparagine 350 carries N-linked (GlcNAc...) asparagine glycosylation.

Belongs to the sulfatase family. Homodimer at neutral pH and homooctamer at acidic pH. Exists both as a single chain of 58 kDa (component A) or as a chain of 50 kDa (component B) linked by disulfide bond(s) to a 7 kDa chain (component C). Interacts with SUMF1. Ca(2+) serves as cofactor. Post-translationally, the conversion to 3-oxoalanine (also known as C-formylglycine, FGly), of a serine or cysteine residue in prokaryotes and of a cysteine residue in eukaryotes, is critical for catalytic activity. This post-translational modification is severely defective in multiple sulfatase deficiency (MSD).

It is found in the endoplasmic reticulum. Its subcellular location is the lysosome. It carries out the reaction an N-acyl-1-beta-D-(3-O-sulfo)-galactosyl-sphing-4-enine + H2O = a beta-D-galactosyl-(1&lt;-&gt;1')-N-acylsphing-4-enine + sulfate + H(+). Its activity is regulated as follows. Inhibited by phosphate. The phosphate forms a covalent bond with the active site 3-oxoalanine. Its function is as follows. Hydrolyzes cerebroside sulfate. In Homo sapiens (Human), this protein is Arylsulfatase A (ARSA).